The following is a 1332-amino-acid chain: Abscisic-aldehyde oxidase (1332 aa).

A 2Fe-2S ferredoxin-type domain is found at 1 to 88; that stretch reads MDLEFAVNGE…GCSITTSEGL (88 aa). Positions 40, 45, and 48 each coordinate [2Fe-2S] cluster. The FAD-binding PCMH-type domain occupies 219-400; sequence SDHLKYRWTT…LKVEIPSWTA (182 aa).

The protein belongs to the xanthine dehydrogenase family. In terms of assembly, aldehyde oxidases (AO) are homodimers and heterodimers of AO subunits. AO-delta is a AAO3 homodimer. AAO3 also forms a dimer with AAO2. Interacts with PUB44, and this interaction probably results in targeting of this protein to the proteasome. [2Fe-2S] cluster is required as a cofactor. FAD serves as cofactor. Requires Mo-molybdopterin as cofactor. In terms of tissue distribution, expressed in vascular tissues of all organs, particularly in phloem companion cells and xylem parenchymatic cells. Highly expressed in roots and rosettes, and to lower extent in seedlings, stems and flowers. Expressed at very low levels in siliques and dry seeds. Also detected in root dividing cells (tips and primordia), in mesophyll cells and inside the guard cells.

It localises to the cytoplasm. It catalyses the reaction 2-cis-(+)-abscisic aldehyde + O2 + H2O = 2-cis-(+)-abscisate + H2O2 + H(+). The catalysed reaction is 1-naphthaldehyde + O2 + H2O = 1-naphthoate + H2O2 + H(+). The enzyme catalyses indole-3-acetaldehyde + O2 + H2O = (indol-3-yl)acetate + H2O2 + H(+). Its function is as follows. In higher plants aldehyde oxidases (AO) appear to be homo- and heterodimeric assemblies of AO subunits with probably different physiological functions. AO-delta may be involved in the last step of abscisic acid biosynthesis, at least in leaves and seeds. In vitro, AO-delta oxidizes abscisic aldehyde to abscisic acid (ABA). In vitro, AO-delta also uses 1-naphthaldehyde, indole-3-aldehyde (IAld), benzaldehyde and cinnamaldehyde as substrate; the AAO2-AAO3 dimer also uses abscisic aldehyde as substrate. This is Abscisic-aldehyde oxidase (AAO3) from Arabidopsis thaliana (Mouse-ear cress).